A 101-amino-acid chain; its full sequence is Apolipoprotein C-II (101 aa).

The N-terminal stretch at 1–17 (MGTRFLLALCLVLLVLG) is a signal peptide. The interval 66-74 (AVDEKLRDL) is lipid binding. Residues 78-101 (STAAMSTYTGIFTDQVLSVLKGEE) form a lipoprotein lipase cofactor region.

It belongs to the apolipoprotein C2 family. Post-translationally, proapolipoprotein C-II is synthesized as a sialic acid containing glycoprotein which is subsequently desialylated prior to its proteolytic processing. Proapolipoprotein C-II, the major form found in plasma undergoes proteolytic cleavage of its N-terminal hexapeptide to generate apolipoprotein C-II, which occurs as the minor form in plasma.

It is found in the secreted. In terms of biological role, component of chylomicrons, very low-density lipoproteins (VLDL), low-density lipoproteins (LDL), and high-density lipoproteins (HDL) in plasma. Plays an important role in lipoprotein metabolism as an activator of lipoprotein lipase. Both proapolipoprotein C-II and apolipoprotein C-II can activate lipoprotein lipase. The sequence is that of Apolipoprotein C-II (APOC2) from Chlorocebus sabaeus (Green monkey).